A 2210-amino-acid chain; its full sequence is Filamin-A (2210 aa).

Calponin-homology (CH) domains follow at residues 15–120 (KIQQ…LHYS) and 139–242 (HTPK…NSKL). Filamin repeat units follow at residues 249 to 347 (RPKT…PVKV), 349 to 447 (GHAG…PVKV), 448 to 544 (APLS…EVKV), 545 to 635 (GPKK…IAQI), 638 to 734 (RTDF…RVYV), 735 to 831 (GVPV…VVVE), 832 to 929 (QTVD…VVNV), 930 to 1022 (KSGC…RVLV), 1023 to 1121 (EETV…VMTV), 1122 to 1217 (FPKS…KLEA), 1218 to 1312 (FPTG…SIKA), 1322 to 1423 (SEYI…KFHV), 1424 to 1515 (DSIT…FAKI), 1516 to 1603 (TGEG…KVTV), 1606 to 1698 (REVG…TVKV), 1699 to 1796 (AGEG…QFTV), 1799 to 1891 (LRDS…KVYV), 1893 to 1986 (PDAG…RIKV), 1988 to 2079 (KDVA…KVNA), and 2116 to 2210 (TFKS…QIDV).

The protein belongs to the filamin family. As to quaternary structure, interacts with Ten-m. As to expression, germline-specific in females (at protein level). Expressed in ovary.

Its subcellular location is the cytoplasm. The protein localises to the cytoskeleton. It is found in the cell membrane. In terms of biological role, involved in the germline ring canal formation. May tether actin microfilament within the ovarian ring canal to the cell membrane. Contributes to actin microfilaments organization. This is Filamin-A (cher) from Drosophila melanogaster (Fruit fly).